A 118-amino-acid polypeptide reads, in one-letter code: Large ribosomal subunit protein bL20 (118 aa).

This sequence belongs to the bacterial ribosomal protein bL20 family.

Functionally, binds directly to 23S ribosomal RNA and is necessary for the in vitro assembly process of the 50S ribosomal subunit. It is not involved in the protein synthesizing functions of that subunit. This Bacillus cytotoxicus (strain DSM 22905 / CIP 110041 / 391-98 / NVH 391-98) protein is Large ribosomal subunit protein bL20.